The following is an 861-amino-acid chain: ATP-dependent helicase rhp16 (861 aa).

Over residues 1-13 the composition is skewed to polar residues; that stretch reads MGTSCNKINSNSN. The disordered stretch occupies residues 1–217; that stretch reads MGTSCNKINS…KSIPSHERTH (217 aa). Basic and acidic residues-rich tracts occupy residues 14–23 and 38–57; these read KGKENMHFVL and VERD…KEFE. The span at 60-82 shows a compositional bias: polar residues; sequence LSTNKKLIIQSNNTSSQHSTPPL. Over residues 83–95 the composition is skewed to low complexity; the sequence is SISDTSTHTGSST. Over residues 96 to 106 the composition is skewed to polar residues; the sequence is DNVEANPNTGF. The segment covering 109–123 has biased composition (basic residues); it reads ARKRSLRSSNLKKKF. Residues 131 to 145 show a composition bias toward acidic residues; sequence ESNESEFIDDDESDE. The segment covering 193-204 has biased composition (low complexity); it reads ARASSSASSSSR. A Helicase ATP-binding domain is found at 268-442; it reads RQEDSSFGGG…FSLLRFLRAD (175 aa). 281–288 contacts ATP; it reads DEMGMGKT. The short motif at 393–396 is the DEAH box element; sequence DEAH. The RING-type zinc-finger motif lies at 609-652; sequence CKICDEVAQDAIESRCHHTFCRLCVTEYINAAGDGENVNCPSCF. One can recognise a Helicase C-terminal domain in the interval 695-848; that stretch reads LVEELYLLRK…TIDQDEKALN (154 aa).

This sequence belongs to the SNF2/RAD54 helicase family.

Its subcellular location is the nucleus. Functionally, involved in global genome repair (GGR) via nucleotide excision repair (NER), in conjunction with rhp7, after UV irradiation. This is ATP-dependent helicase rhp16 (rhp16) from Schizosaccharomyces pombe (strain 972 / ATCC 24843) (Fission yeast).